The following is a 365-amino-acid chain: 1-deoxy-D-xylulose 5-phosphate reductoisomerase (365 aa).

Residues Thr-7, Gly-8, Ser-9, Ile-10, Ala-31, Lys-32, Asn-33, and Asn-114 each coordinate NADPH. A 1-deoxy-D-xylulose 5-phosphate-binding site is contributed by Lys-115. Glu-116 contributes to the NADPH binding site. A Mn(2+)-binding site is contributed by Asp-134. Residues Ser-135, Glu-136, Ser-158, and His-181 each coordinate 1-deoxy-D-xylulose 5-phosphate. Glu-136 is a Mn(2+) binding site. Gly-187 serves as a coordination point for NADPH. 4 residues coordinate 1-deoxy-D-xylulose 5-phosphate: Ser-194, Asn-199, Lys-200, and Glu-203. Glu-203 contacts Mn(2+).

The protein belongs to the DXR family. Mg(2+) serves as cofactor. The cofactor is Mn(2+).

The catalysed reaction is 2-C-methyl-D-erythritol 4-phosphate + NADP(+) = 1-deoxy-D-xylulose 5-phosphate + NADPH + H(+). Its pathway is isoprenoid biosynthesis; isopentenyl diphosphate biosynthesis via DXP pathway; isopentenyl diphosphate from 1-deoxy-D-xylulose 5-phosphate: step 1/6. In terms of biological role, catalyzes the NADPH-dependent rearrangement and reduction of 1-deoxy-D-xylulose-5-phosphate (DXP) to 2-C-methyl-D-erythritol 4-phosphate (MEP). The sequence is that of 1-deoxy-D-xylulose 5-phosphate reductoisomerase from Campylobacter curvus (strain 525.92).